A 98-amino-acid polypeptide reads, in one-letter code: Large ribosomal subunit protein uL23 (98 aa).

Belongs to the universal ribosomal protein uL23 family. Part of the 50S ribosomal subunit. Contacts protein L29, and trigger factor when it is bound to the ribosome.

In terms of biological role, one of the early assembly proteins it binds 23S rRNA. One of the proteins that surrounds the polypeptide exit tunnel on the outside of the ribosome. Forms the main docking site for trigger factor binding to the ribosome. The polypeptide is Large ribosomal subunit protein uL23 (Limosilactobacillus reuteri (strain DSM 20016) (Lactobacillus reuteri)).